Reading from the N-terminus, the 308-residue chain is Ornithine carbamoyltransferase (308 aa).

Carbamoyl phosphate-binding positions include 55-58 (STRT), Gln-82, Arg-106, and 133-136 (HPCQ). L-ornithine contacts are provided by residues Asn-164, Asp-227, and 231–232 (SM). Residues 267–268 (CL) and Arg-295 contribute to the carbamoyl phosphate site.

This sequence belongs to the aspartate/ornithine carbamoyltransferase superfamily. OTCase family.

It localises to the cytoplasm. It carries out the reaction carbamoyl phosphate + L-ornithine = L-citrulline + phosphate + H(+). It participates in amino-acid biosynthesis; L-arginine biosynthesis; L-arginine from L-ornithine and carbamoyl phosphate: step 1/3. Functionally, reversibly catalyzes the transfer of the carbamoyl group from carbamoyl phosphate (CP) to the N(epsilon) atom of ornithine (ORN) to produce L-citrulline. This is Ornithine carbamoyltransferase from Prochlorococcus marinus (strain MIT 9312).